Here is a 431-residue protein sequence, read N- to C-terminus: Enolase (431 aa).

Glutamine 167 contacts (2R)-2-phosphoglycerate. Glutamate 209 acts as the Proton donor in catalysis. Mg(2+)-binding residues include aspartate 246, glutamate 290, and aspartate 317. (2R)-2-phosphoglycerate is bound by residues lysine 342, arginine 371, serine 372, and lysine 393. Lysine 342 functions as the Proton acceptor in the catalytic mechanism.

This sequence belongs to the enolase family. Component of the RNA degradosome, a multiprotein complex involved in RNA processing and mRNA degradation. Requires Mg(2+) as cofactor.

The protein localises to the cytoplasm. Its subcellular location is the secreted. It localises to the cell surface. It carries out the reaction (2R)-2-phosphoglycerate = phosphoenolpyruvate + H2O. It participates in carbohydrate degradation; glycolysis; pyruvate from D-glyceraldehyde 3-phosphate: step 4/5. Catalyzes the reversible conversion of 2-phosphoglycerate (2-PG) into phosphoenolpyruvate (PEP). It is essential for the degradation of carbohydrates via glycolysis. The chain is Enolase from Yersinia enterocolitica serotype O:8 / biotype 1B (strain NCTC 13174 / 8081).